A 75-amino-acid chain; its full sequence is U6-lycotoxin-Ls1e (75 aa).

An N-terminal signal peptide occupies residues 1-21 (MKLLLFTALVLVVISLIEVEA). The propeptide occupies 22-25 (ENER).

Belongs to the neurotoxin 19 (CSTX) family. 06 (U6-Lctx) subfamily. Post-translationally, contains 4 disulfide bonds. As to expression, expressed by the venom gland.

It localises to the secreted. In Lycosa singoriensis (Wolf spider), this protein is U6-lycotoxin-Ls1e.